The sequence spans 330 residues: Inositol 2-dehydrogenase (330 aa).

It belongs to the Gfo/Idh/MocA family.

It carries out the reaction myo-inositol + NAD(+) = scyllo-inosose + NADH + H(+). The protein operates within polyol metabolism; myo-inositol degradation into acetyl-CoA; acetyl-CoA from myo-inositol: step 1/7. Involved in the oxidation of myo-inositol (MI) to 2-keto-myo-inositol (2KMI or 2-inosose). In Rhizobium meliloti (strain 1021) (Ensifer meliloti), this protein is Inositol 2-dehydrogenase (idhA).